Here is an 878-residue protein sequence, read N- to C-terminus: Phosphoenolpyruvate carboxylase (878 aa).

Catalysis depends on residues His-138 and Lys-545.

It belongs to the PEPCase type 1 family. The cofactor is Mg(2+).

It carries out the reaction oxaloacetate + phosphate = phosphoenolpyruvate + hydrogencarbonate. Functionally, forms oxaloacetate, a four-carbon dicarboxylic acid source for the tricarboxylic acid cycle. This chain is Phosphoenolpyruvate carboxylase, found in Shewanella halifaxensis (strain HAW-EB4).